Here is a 151-residue protein sequence, read N- to C-terminus: Small ribosomal subunit protein uS9 (151 aa).

This sequence belongs to the universal ribosomal protein uS9 family.

This chain is Small ribosomal subunit protein uS9 (RpS16), found in Spodoptera frugiperda (Fall armyworm).